A 254-amino-acid polypeptide reads, in one-letter code: 3-dehydroquinate dehydratase (254 aa).

Residues 47 to 49 (EWR) and R83 contribute to the 3-dehydroquinate site. H144 acts as the Proton donor/acceptor in catalysis. Residue K171 is the Schiff-base intermediate with substrate of the active site. 3-dehydroquinate-binding residues include R214, S233, and Q237.

This sequence belongs to the type-I 3-dehydroquinase family. Homodimer.

The catalysed reaction is 3-dehydroquinate = 3-dehydroshikimate + H2O. Its pathway is metabolic intermediate biosynthesis; chorismate biosynthesis; chorismate from D-erythrose 4-phosphate and phosphoenolpyruvate: step 3/7. Functionally, involved in the third step of the chorismate pathway, which leads to the biosynthesis of aromatic amino acids. Catalyzes the cis-dehydration of 3-dehydroquinate (DHQ) and introduces the first double bond of the aromatic ring to yield 3-dehydroshikimate. The protein is 3-dehydroquinate dehydratase of Bacillus licheniformis (strain ATCC 14580 / DSM 13 / JCM 2505 / CCUG 7422 / NBRC 12200 / NCIMB 9375 / NCTC 10341 / NRRL NRS-1264 / Gibson 46).